We begin with the raw amino-acid sequence, 200 residues long: MTEFTRHTGIVVPLDAANVDTDAIIPKQFLQKVTRSGFGRHLFHDWRFLDEAGERPNPAFVLNQPPFQQGSILLARENFGCGSSREHAPWALTDYGFRVVIAPSFADIFYGNAFNSQLLPIILDEAQIAALFTLVSASPGIAFSVDVEQQTLQAGDTRYTFTLDPFRRHCLIHGLDSIGLTLRHASAIDDYEARRPAFLR.

Belongs to the LeuD family. LeuD type 1 subfamily. In terms of assembly, heterodimer of LeuC and LeuD.

The catalysed reaction is (2R,3S)-3-isopropylmalate = (2S)-2-isopropylmalate. It functions in the pathway amino-acid biosynthesis; L-leucine biosynthesis; L-leucine from 3-methyl-2-oxobutanoate: step 2/4. Its function is as follows. Catalyzes the isomerization between 2-isopropylmalate and 3-isopropylmalate, via the formation of 2-isopropylmaleate. This chain is 3-isopropylmalate dehydratase small subunit, found in Edwardsiella ictaluri (strain 93-146).